The chain runs to 515 residues: Maturase K (515 aa).

Belongs to the intron maturase 2 family. MatK subfamily.

It is found in the plastid. Its subcellular location is the chloroplast. Functionally, usually encoded in the trnK tRNA gene intron. Probably assists in splicing its own and other chloroplast group II introns. The sequence is that of Maturase K from Pinus koraiensis (Korean pine).